Here is a 111-residue protein sequence, read N- to C-terminus: Universal stress protein B (111 aa).

Transmembrane regions (helical) follow at residues 1–21 and 90–110; these read MIST…NMAR and FILT…LLIW.

The protein belongs to the universal stress protein B family.

The protein resides in the cell inner membrane. The protein is Universal stress protein B of Enterobacter sp. (strain 638).